The following is a 318-amino-acid chain: Bis(5'-nucleosyl)-tetraphosphatase, symmetrical (318 aa).

The segment at 269-318 (PGREVTGPAPVARAPRRPRERLGRQRSRGNRGNAGNTAVPAKPPVDTPQD) is disordered. The span at 282-297 (APRRPRERLGRQRSRG) shows a compositional bias: basic residues. The segment covering 309 to 318 (AKPPVDTPQD) has biased composition (pro residues).

This sequence belongs to the Ap4A hydrolase family.

It carries out the reaction P(1),P(4)-bis(5'-adenosyl) tetraphosphate + H2O = 2 ADP + 2 H(+). Functionally, hydrolyzes diadenosine 5',5'''-P1,P4-tetraphosphate to yield ADP. The protein is Bis(5'-nucleosyl)-tetraphosphatase, symmetrical of Xanthomonas oryzae pv. oryzae (strain PXO99A).